Reading from the N-terminus, the 54-residue chain is uncharacterized protein (54 aa).

The segment at 1–38 is disordered; it reads MFPNSNGPNKMKALVAPSNSSTTSKTNNNNLPPNGRSS. Residues 17-38 show a composition bias toward low complexity; it reads PSNSSTTSKTNNNNLPPNGRSS.

This is an uncharacterized protein from Dictyostelium discoideum (Social amoeba).